Here is a 212-residue protein sequence, read N- to C-terminus: Ras-related protein Rab-2A (212 aa).

Ala2 is subject to N-acetylalanine. The required for interaction with PRKCI stretch occupies residues 2–19; the sequence is AYAYLFKYIIIGDTGVGK. Gly16, Val17, Gly18, Lys19, Ser20, Cys21, and Thr38 together coordinate GTP. A Mg(2+)-binding site is contributed by Ser20. A Switch 1 motif is present at residues 37 to 42; the sequence is LTMGVE. Mg(2+)-binding residues include Thr38 and Asp61. Residues 63-72 carry the Switch 2 motif; that stretch reads AGQESFRSIT. Positions 64, 119, 120, 122, 150, and 151 each coordinate GTP. A disordered region spans residues 190 to 212; the sequence is QHAATNASHGGNQGGQQAGGGCC. The span at 200 to 212 shows a compositional bias: gly residues; sequence GNQGGQQAGGGCC. 2 S-geranylgeranyl cysteine lipidation sites follow: Cys211 and Cys212.

The protein belongs to the small GTPase superfamily. Rab family. As to quaternary structure, interacts with PRKCI. Interacts with TRIP11. Interacts (in GTP-bound form) with GARIN1B. Interacts (GTP-bound) with HOPS complex component VPS39; interaction contributes to obtaining a functional HOPS complex that promotes autophagosome-lysosome membrane fusion driven by STX17-SNAP29-VAMP8. May interact with VPS41. The cofactor is Mg(2+). Prenylated. Prenylation is required for association with cellular membranes.

The protein localises to the endoplasmic reticulum-Golgi intermediate compartment membrane. It is found in the melanosome. The protein resides in the endoplasmic reticulum membrane. It localises to the golgi apparatus membrane. Its subcellular location is the cytoplasmic vesicle. The protein localises to the secretory vesicle. It is found in the acrosome. The protein resides in the autophagosome membrane. The catalysed reaction is GTP + H2O = GDP + phosphate + H(+). Its activity is regulated as follows. Regulated by guanine nucleotide exchange factors (GEFs) which promote the exchange of bound GDP for free GTP, GTPase activating proteins (GAPs) which increase the GTP hydrolysis activity, and GDP dissociation inhibitors (GDIs) which inhibit the dissociation of the nucleotide from the GTPase. The small GTPases Rab are key regulators of intracellular membrane trafficking, from the formation of transport vesicles to their fusion with membranes. Rabs cycle between active GTP-bound and inactive GDP-bound states. In their active state, drive transport of vesicular carriers from donor organelles to acceptor organelles to regulate the membrane traffic that maintains organelle identity and morphology. RAB2A regulates autophagy by promoting autophagosome-lysosome fusion via recruitment of the HOPS endosomal tethering complex; this process involves autophagosomal RAB2A and lysosomal RAB39A recruitment of HOPS subcomplexes VPS39-VPS11 and VPS41-VPS16-VPS18-VPS33A, respectively, which assemble into a functional complex to mediate membrane tethering and SNAREs-driven membrane fusion. Required for protein transport from the endoplasmic reticulum to the Golgi complex. Regulates the compacted morphology of the Golgi. Together with RAB2B, redundantly required for efficient autophagic flux. The chain is Ras-related protein Rab-2A (Rab2a) from Rattus norvegicus (Rat).